We begin with the raw amino-acid sequence, 218 residues long: UPF0319 protein swp_2242 (218 aa).

The N-terminal stretch at 1-21 is a signal peptide; it reads MRLSQSVLTALLICVNSAAFA.

This sequence belongs to the UPF0319 family.

In Shewanella piezotolerans (strain WP3 / JCM 13877), this protein is UPF0319 protein swp_2242.